Here is a 213-residue protein sequence, read N- to C-terminus: BREX protein BrxA (213 aa).

This sequence belongs to the BrxA family.

Its function is as follows. BREX systems (bacteriophage exclusion) provide immunity against bacteriophage. A probably non-essential part of a type 1 BREX system which protects against dsDNA phage. This system allows phage adsorption but prevents phage DNA replication, without degradation of the phage DNA. Methylation of bacterial DNA by PglX guides self/non-self discrimination. When the brxA-brxB-brxC-pglX-pglZ-brxL genes are transformed into a susceptible E.coli strain (BW25113) they confer very high resistance to infection by bacteriophage VR7 and VpaE1, about 100-fold protection against lambda, T5 and T7 and no protection against RNA phage Qbeta, ssDNA phage M13 or dSDNA phage T4 and VR5. Glycosylated phage DNA is not susceptible to BREX. The BREX system does not confer resistance to lysogenic lambda phage, i.e. prophage that are integrated into the chromosomal DNA and then induced to form phage. This chain is BREX protein BrxA, found in Escherichia coli O9:H4 (strain HS).